The following is a 557-amino-acid chain: Formate--tetrahydrofolate ligase (557 aa).

65–72 is a binding site for ATP; sequence TPAGEGKT.

It belongs to the formate--tetrahydrofolate ligase family.

The catalysed reaction is (6S)-5,6,7,8-tetrahydrofolate + formate + ATP = (6R)-10-formyltetrahydrofolate + ADP + phosphate. It participates in one-carbon metabolism; tetrahydrofolate interconversion. This is Formate--tetrahydrofolate ligase from Methylobacterium radiotolerans (strain ATCC 27329 / DSM 1819 / JCM 2831 / NBRC 15690 / NCIMB 10815 / 0-1).